Consider the following 211-residue polypeptide: Arginine exporter protein ArgO (211 aa).

Helical transmembrane passes span 1–21 (MISY…PLGP), 37–57 (LMIA…GIFG), 68–88 (LLAL…FGAL), 111–131 (IIAT…DTFV), 147–167 (WFAL…ALLA), and 179–199 (AQRI…FQLA).

This sequence belongs to the LysE/ArgO transporter (TC 2.A.75) family.

The protein resides in the cell inner membrane. It carries out the reaction L-arginine(in) = L-arginine(out). Involved in the export of arginine. Important to control the intracellular level of arginine and the correct balance between arginine and lysine. The protein is Arginine exporter protein ArgO of Salmonella paratyphi C (strain RKS4594).